The primary structure comprises 259 residues: MLIVVSPAKTLDYETPLPTSAFTQPDFISDSAELIKACRTLTPVDIAKLMKVSDKIASLNAVRFEEWSTTFTQENARPALFAFKGDVYTGLDANSLSESEIEYAQTNLRMLSGLYGLLKPLDLMQPYRLEMGTKLENGRGSNLYQFWGSLITNKLNQELEAQGSETLVNLASNEYFKSVKPKELKADIVTPVFKDCKNGQYKVISFYAKKARGLMARFIIQNKISNVEELKSFDSDGYYFVEAESTATTLVFKREEQNK.

Belongs to the UPF0246 family.

This Aliivibrio fischeri (strain MJ11) (Vibrio fischeri) protein is UPF0246 protein VFMJ11_2214.